A 226-amino-acid polypeptide reads, in one-letter code: Ribose-5-phosphate isomerase A (226 aa).

Residues 28-31 (TGST), 80-83 (DGAD), and 93-96 (KGGG) contribute to the substrate site. Glutamate 102 acts as the Proton acceptor in catalysis. Residue lysine 120 participates in substrate binding.

Belongs to the ribose 5-phosphate isomerase family. As to quaternary structure, homodimer.

The enzyme catalyses aldehydo-D-ribose 5-phosphate = D-ribulose 5-phosphate. Its pathway is carbohydrate degradation; pentose phosphate pathway; D-ribose 5-phosphate from D-ribulose 5-phosphate (non-oxidative stage): step 1/1. In terms of biological role, catalyzes the reversible conversion of ribose-5-phosphate to ribulose 5-phosphate. This is Ribose-5-phosphate isomerase A from Caulobacter sp. (strain K31).